The sequence spans 317 residues: tRNA dimethylallyltransferase (317 aa).

14–21 (GPTASGKT) contacts ATP. Residue 16–21 (TASGKT) participates in substrate binding. 2 interaction with substrate tRNA regions span residues 39 to 42 (DSAL) and 163 to 167 (QRIQR).

Belongs to the IPP transferase family. Monomer. It depends on Mg(2+) as a cofactor.

It carries out the reaction adenosine(37) in tRNA + dimethylallyl diphosphate = N(6)-dimethylallyladenosine(37) in tRNA + diphosphate. Its function is as follows. Catalyzes the transfer of a dimethylallyl group onto the adenine at position 37 in tRNAs that read codons beginning with uridine, leading to the formation of N6-(dimethylallyl)adenosine (i(6)A). The protein is tRNA dimethylallyltransferase of Stenotrophomonas maltophilia (strain K279a).